We begin with the raw amino-acid sequence, 423 residues long: Serine hydroxymethyltransferase (423 aa).

Residues Leu120 and 124–126 (GHL) each bind (6S)-5,6,7,8-tetrahydrofolate. Lys229 carries the post-translational modification N6-(pyridoxal phosphate)lysine. 353–355 (SPF) serves as a coordination point for (6S)-5,6,7,8-tetrahydrofolate.

Belongs to the SHMT family. In terms of assembly, homodimer. Pyridoxal 5'-phosphate serves as cofactor.

It is found in the cytoplasm. It catalyses the reaction (6R)-5,10-methylene-5,6,7,8-tetrahydrofolate + glycine + H2O = (6S)-5,6,7,8-tetrahydrofolate + L-serine. It functions in the pathway one-carbon metabolism; tetrahydrofolate interconversion. The protein operates within amino-acid biosynthesis; glycine biosynthesis; glycine from L-serine: step 1/1. Its function is as follows. Catalyzes the reversible interconversion of serine and glycine with tetrahydrofolate (THF) serving as the one-carbon carrier. This reaction serves as the major source of one-carbon groups required for the biosynthesis of purines, thymidylate, methionine, and other important biomolecules. Also exhibits THF-independent aldolase activity toward beta-hydroxyamino acids, producing glycine and aldehydes, via a retro-aldol mechanism. This Prochlorococcus marinus (strain AS9601) protein is Serine hydroxymethyltransferase.